The chain runs to 126 residues: MPEPAKSAPAPKKGSKKAVTKTQKKGDKKRKKSRKESYSIYVYKVLKQVHPDTGISSKAMGIMNSFVNDIFERIAGEASRLAHYNKRSTITSREIQTAVRLLLPGELAKHAVSEGTKAVTKYTSSK.

Residues 1–12 (MPEPAKSAPAPK) show a composition bias toward low complexity. The disordered stretch occupies residues 1–36 (MPEPAKSAPAPKKGSKKAVTKTQKKGDKKRKKSRKE). N6-acetyllysine occurs at positions 6 and 13. The span at 13-34 (KGSKKAVTKTQKKGDKKRKKSR) shows a compositional bias: basic residues. Ser-15 bears the Phosphoserine mark. An N6-acetyllysine mark is found at Lys-16 and Lys-21. Residue Lys-121 forms a Glycyl lysine isopeptide (Lys-Gly) (interchain with G-Cter in ubiquitin) linkage.

This sequence belongs to the histone H2B family. As to quaternary structure, the nucleosome is a histone octamer containing two molecules each of H2A, H2B, H3 and H4 assembled in one H3-H4 heterotetramer and two H2A-H2B heterodimers. The octamer wraps approximately 147 bp of DNA. Monoubiquitination of Lys-121 by the BRE1 gives a specific tag for epigenetic transcriptional activation and is also prerequisite for histone H3 'Lys-4' and 'Lys-79' methylation. Post-translationally, phosphorylated on Ser-15 during apoptosis; which facilitates apoptotic chromatin condensation.

Its subcellular location is the nucleus. The protein localises to the chromosome. Functionally, core component of nucleosome. Nucleosomes wrap and compact DNA into chromatin, limiting DNA accessibility to the cellular machineries which require DNA as a template. Histones thereby play a central role in transcription regulation, DNA repair, DNA replication and chromosomal stability. DNA accessibility is regulated via a complex set of post-translational modifications of histones, also called histone code, and nucleosome remodeling. Its function is as follows. Has broad-spectrum antibacterial activity. May be important in the antimicrobial defenses of chick reproductive system during follicle development in the ovary and egg formation in the oviduct. The chain is Histone H2B 1/2/3/4/6 (H2B-I) from Gallus gallus (Chicken).